The chain runs to 318 residues: Epithelial-stromal interaction protein 1 (318 aa).

Residues 1–60 (MNTRNRVVNSGLGASPASRPTRDPQDPSGRQGELSPVEDQREGLEAAPKGPSRESVVHAG) are disordered. Coiled-coil stretches lie at residues 73 to 188 (NINR…HQQY) and 240 to 280 (LKAE…HQTE).

In terms of tissue distribution, highly expressed in placenta, small intestine, spleen, kidney, thymus, liver, salivary gland and testes. Weakly expressed in breast, skeletal muscle and colon. Highly expressed in breast cancer upon interaction between tumor cells and stromal cells in vitro. Expressed in blood mononuclear cells from patients with systemic lupus erythematosus (SLE).

Plays a role in M1 macrophage polarization and is required for the proper regulation of gene expression during M1 versus M2 macrophage differentiation. Might play a role in RELA/p65 and STAT1 phosphorylation and nuclear localization upon activation of macrophages. The protein is Epithelial-stromal interaction protein 1 (EPSTI1) of Homo sapiens (Human).